A 77-amino-acid polypeptide reads, in one-letter code: Dermatoxin-S1 (77 aa).

An N-terminal signal peptide occupies residues 1–22 (MAFLKKSLFLILFLGLVPLSFC). A propeptide spanning residues 23–44 (ENDKREGENEEEQDDDQSEEKR) is cleaved from the precursor. At glutamine 76 the chain carries Glutamine amide.

Expressed by the skin glands.

Its subcellular location is the secreted. It is found in the target cell membrane. Its function is as follows. Antimicrobial peptide with potent activity against Gram-positive bacteria B.megaterium, C.glutamicum and S.aureus and mollicutes A.laidlawii and S.melliferum. Less active against Gram-negative bacteria B.cepacia, P.aeruginosa, S.typhimurium and S.meliloti. Probably acts by disturbing membrane functions with its amphipathic structure. The chain is Dermatoxin-S1 from Phyllomedusa sauvagei (Sauvage's leaf frog).